A 134-amino-acid polypeptide reads, in one-letter code: Cytochrome c-type biogenesis protein CcmE (134 aa).

Over 1–7 (MKRKYRR) the chain is Cytoplasmic. A helical; Signal-anchor for type II membrane protein membrane pass occupies residues 8–28 (LFVVIITLSIFAGSVVLVLGK). The Periplasmic segment spans residues 29–134 (LKNNVSFFYT…MPNKYKTNDL (106 aa)). Heme contacts are provided by H120 and Y124.

This sequence belongs to the CcmE/CycJ family.

It is found in the cell inner membrane. Its function is as follows. Heme chaperone required for the biogenesis of c-type cytochromes. Transiently binds heme delivered by CcmC and transfers the heme to apo-cytochromes in a process facilitated by CcmF and CcmH. The chain is Cytochrome c-type biogenesis protein CcmE from Ehrlichia ruminantium (strain Welgevonden).